We begin with the raw amino-acid sequence, 139 residues long: Mitochondrial intermembrane space import and assembly protein 40-A (139 aa).

Cystine bridges form between Cys-53/Cys-55, Cys-64/Cys-97, and Cys-74/Cys-87. In terms of domain architecture, CHCH spans 61–105 (SGPCGEQFKSAFSCFHYSQEEIKGSDCLDQFRGMQECMQKYPDLY). 2 consecutive short sequence motifs (cx9C motif) follow at residues 64-74 (CGEQFKSAFSC) and 87-97 (CLDQFRGMQEC). The disordered stretch occupies residues 103-139 (DLYPQEDDEEEAEKEKQNKEAEPSVTQSSDTKEESSS). Positions 115 to 124 (EKEKQNKEAE) are enriched in basic and acidic residues.

Monomer. Can form homooligomers.

It localises to the mitochondrion intermembrane space. Central component of a redox-sensitive mitochondrial intermembrane space import machinery which is required for the biogenesis of respiratory chain complexes. Functions as chaperone and catalyzes the formation of disulfide bonds in substrate proteins, such as COX17 or MICU1. Required for the import and folding of small cysteine-containing proteins (small Tim) in the mitochondrial intermembrane space (IMS). Precursor proteins to be imported into the IMS are translocated in their reduced form into the mitochondria. The protein is Mitochondrial intermembrane space import and assembly protein 40-A (chchd4-a) of Xenopus laevis (African clawed frog).